The following is a 478-amino-acid chain: Pentraxin-4 (478 aa).

The first 25 residues, 1–25 (MGCSWRKTLSFFLVFVPIYLHGASS), serve as a signal peptide directing secretion. N-linked (GlcNAc...) asparagine glycans are attached at residues asparagine 67 and asparagine 91. A compositionally biased stretch (basic and acidic residues) spans 208–222 (RDRQELRAASEHRGP). Residues 208-262 (RDRQELRAASEHRGPPQDSSAPLQGRREPPASGSHRVLSGTAPKDPRQQAWSPQV) are disordered. Residues 269–473 (VGPTLVFPNA…GFVQGANCTC (205 aa)) form the Pentraxin (PTX) domain. A disulfide bridge connects residues cysteine 300 and cysteine 364. Aspartate 322, asparagine 323, glutamate 406, glutamine 407, and aspartate 408 together coordinate Ca(2+).

Requires Ca(2+) as cofactor. As to expression, widely expressed at low levels with highest levels in small intestine, testis and brain. Very low expression in endothelial cells, monocytes, neutrophils and lymphocytes. Isoform 1 is not expressed in small intestine.

Its subcellular location is the secreted. This is Pentraxin-4 (PTX4) from Homo sapiens (Human).